The sequence spans 139 residues: Mitochondrial intermembrane space import and assembly protein 40-A (139 aa).

Disulfide bonds link Cys53–Cys55, Cys64–Cys97, and Cys74–Cys87. Positions 61–105 (SGPCGEQFKSAFSCFHYSQEEIKGSDCLDQFRGMQECMQKYPDLY) constitute a CHCH domain. Short sequence motifs (cx9C motif) lie at residues 64 to 74 (CGEQFKSAFSC) and 87 to 97 (CLDQFRGMQEC). Positions 103–139 (DLYPQEDDEEEAEKEKQNKEAEPSVTQSSDTKEESSS) are disordered. Residues 115-124 (EKEKQNKEAE) show a composition bias toward basic and acidic residues.

As to quaternary structure, monomer. Can form homooligomers.

The protein localises to the mitochondrion intermembrane space. Central component of a redox-sensitive mitochondrial intermembrane space import machinery which is required for the biogenesis of respiratory chain complexes. Functions as chaperone and catalyzes the formation of disulfide bonds in substrate proteins, such as COX17 or MICU1. Required for the import and folding of small cysteine-containing proteins (small Tim) in the mitochondrial intermembrane space (IMS). Precursor proteins to be imported into the IMS are translocated in their reduced form into the mitochondria. The chain is Mitochondrial intermembrane space import and assembly protein 40-A (chchd4-a) from Xenopus laevis (African clawed frog).